Consider the following 490-residue polypeptide: ATP synthase subunit beta (490 aa).

173-180 contacts ATP; the sequence is GGAGVGKT.

The protein belongs to the ATPase alpha/beta chains family. In terms of assembly, F-type ATPases have 2 components, CF(1) - the catalytic core - and CF(0) - the membrane proton channel. CF(1) has five subunits: alpha(3), beta(3), gamma(1), delta(1), epsilon(1). CF(0) has three main subunits: a(1), b(2) and c(9-12). The alpha and beta chains form an alternating ring which encloses part of the gamma chain. CF(1) is attached to CF(0) by a central stalk formed by the gamma and epsilon chains, while a peripheral stalk is formed by the delta and b chains.

Its subcellular location is the cell membrane. It carries out the reaction ATP + H2O + 4 H(+)(in) = ADP + phosphate + 5 H(+)(out). Its function is as follows. Produces ATP from ADP in the presence of a proton gradient across the membrane. The catalytic sites are hosted primarily by the beta subunits. This Bifidobacterium longum (strain DJO10A) protein is ATP synthase subunit beta.